The following is a 363-amino-acid chain: Chorismate synthase (363 aa).

The NADP(+) site is built by R48 and R54. Residues 125-127 (RSS), 237-238 (NA), G277, 292-296 (KPTSS), and R318 contribute to the FMN site.

The protein belongs to the chorismate synthase family. Homotetramer. Requires FMNH2 as cofactor.

The catalysed reaction is 5-O-(1-carboxyvinyl)-3-phosphoshikimate = chorismate + phosphate. Its pathway is metabolic intermediate biosynthesis; chorismate biosynthesis; chorismate from D-erythrose 4-phosphate and phosphoenolpyruvate: step 7/7. Functionally, catalyzes the anti-1,4-elimination of the C-3 phosphate and the C-6 proR hydrogen from 5-enolpyruvylshikimate-3-phosphate (EPSP) to yield chorismate, which is the branch point compound that serves as the starting substrate for the three terminal pathways of aromatic amino acid biosynthesis. This reaction introduces a second double bond into the aromatic ring system. This is Chorismate synthase from Pseudomonas putida (strain W619).